A 510-amino-acid chain; its full sequence is Serine/threonine protein phosphatase 2A 59 kDa regulatory subunit B' eta isoform (510 aa).

Residues 1 to 87 (MWKQILSKLP…NNNNNNNNGV (87 aa)) are disordered. Over residues 10-19 (PNKKSSKHEH) the composition is skewed to basic residues. The segment covering 27 to 42 (HSSSSSHTSGASTSKS) has biased composition (low complexity).

This sequence belongs to the phosphatase 2A regulatory subunit B56 family. In terms of assembly, PP2A consists of a common heteromeric enzyme, composed of a catalytic subunit (subunits C), a constant regulatory subunit (subunit A), and a variety of regulatory subunits such as subunits B (the R2/B/PR55/B55, R3/B''/PR72/PR130/PR59 and R5/B'/B56 families). Interacts with BZR1. Interacts with BRI1.

It is found in the nucleus. The protein localises to the nucleolus. The protein resides in the cytoplasm. Its function is as follows. The B regulatory subunit may modulate substrate selectivity and catalytic activity, and may also direct the localization of the catalytic enzyme to a particular subcellular compartment. The holoenzyme composed of PP2AA1, PP2A4 and B'ETA acts as negative regulator of plant innate immunity by controlling BAK1 phosphorylation state and activation in surface-localized immune receptor complexes. Required for the formation of the PP2A holoenzyme that negatively regulates brassinosteroid signaling by dephosphorylating and inactivating BRI1 in the cytoplasm. This Arabidopsis thaliana (Mouse-ear cress) protein is Serine/threonine protein phosphatase 2A 59 kDa regulatory subunit B' eta isoform (B'ETA).